A 110-amino-acid chain; its full sequence is UPF0339 protein SO_3888 (110 aa).

A run of 2 repeats spans residues 10–58 (SSND…RYAK) and 61–109 (AKND…IKDL).

This sequence belongs to the UPF0339 family. Duplicated subfamily.

In Shewanella oneidensis (strain ATCC 700550 / JCM 31522 / CIP 106686 / LMG 19005 / NCIMB 14063 / MR-1), this protein is UPF0339 protein SO_3888.